Consider the following 335-residue polypeptide: tRNA N6-adenosine threonylcarbamoyltransferase (335 aa).

Fe cation contacts are provided by histidine 110 and histidine 114. Substrate is bound by residues 132–136 (LVSGG), aspartate 165, glycine 178, and asparagine 271. Aspartate 299 provides a ligand contact to Fe cation.

Belongs to the KAE1 / TsaD family. It depends on Fe(2+) as a cofactor.

It localises to the cytoplasm. The catalysed reaction is L-threonylcarbamoyladenylate + adenosine(37) in tRNA = N(6)-L-threonylcarbamoyladenosine(37) in tRNA + AMP + H(+). Its function is as follows. Required for the formation of a threonylcarbamoyl group on adenosine at position 37 (t(6)A37) in tRNAs that read codons beginning with adenine. Is involved in the transfer of the threonylcarbamoyl moiety of threonylcarbamoyl-AMP (TC-AMP) to the N6 group of A37, together with TsaE and TsaB. TsaD likely plays a direct catalytic role in this reaction. The chain is tRNA N6-adenosine threonylcarbamoyltransferase from Campylobacter jejuni subsp. jejuni serotype O:23/36 (strain 81-176).